A 209-amino-acid polypeptide reads, in one-letter code: MADVAKFLDRVEGSLNRGREIDRILSSFKLNAYDVLDILPGMSVDDIRNLYRKKSLMIHPDKNRDNPKAADAFDILKKAESDLVNDKIRESLDSAYTAARNQLLKEKKLSPNSEDVHSDQFLFDLKVRWREILIADEVARRRARQLDLANQQREQARQDEIARERKRRVESEKVWEETRDNRVGNWQDFLHKTKKNNLKKKNKKPRVLG.

The region spanning 31–96 is the J domain; it reads NAYDVLDILP…KIRESLDSAY (66 aa). 2 disordered regions span residues 149–175 and 187–209; these read ANQQ…EKVW and QDFL…RVLG. Positions 154 to 175 are enriched in basic and acidic residues; sequence EQARQDEIARERKRRVESEKVW. The span at 192–209 shows a compositional bias: basic residues; that stretch reads KTKKNNLKKKNKKPRVLG.

This is J domain-containing protein spf31 (spf31) from Schizosaccharomyces pombe (strain 972 / ATCC 24843) (Fission yeast).